A 96-amino-acid polypeptide reads, in one-letter code: Integration host factor subunit beta (96 aa).

The protein belongs to the bacterial histone-like protein family. As to quaternary structure, heterodimer of an alpha and a beta chain.

In terms of biological role, this protein is one of the two subunits of integration host factor, a specific DNA-binding protein that functions in genetic recombination as well as in transcriptional and translational control. The sequence is that of Integration host factor subunit beta from Caulobacter vibrioides (strain ATCC 19089 / CIP 103742 / CB 15) (Caulobacter crescentus).